A 172-amino-acid polypeptide reads, in one-letter code: NADH-quinone oxidoreductase subunit B (172 aa).

[4Fe-4S] cluster contacts are provided by Cys46, Cys47, Cys111, and Cys141.

This sequence belongs to the complex I 20 kDa subunit family. In terms of assembly, NDH-1 is composed of 14 different subunits. Subunits NuoB, C, D, E, F, and G constitute the peripheral sector of the complex. The cofactor is [4Fe-4S] cluster.

It is found in the cell membrane. The catalysed reaction is a quinone + NADH + 5 H(+)(in) = a quinol + NAD(+) + 4 H(+)(out). Its function is as follows. NDH-1 shuttles electrons from NADH, via FMN and iron-sulfur (Fe-S) centers, to quinones in the respiratory chain. The immediate electron acceptor for the enzyme in this species is believed to be a menaquinone. Couples the redox reaction to proton translocation (for every two electrons transferred, four hydrogen ions are translocated across the cytoplasmic membrane), and thus conserves the redox energy in a proton gradient. The protein is NADH-quinone oxidoreductase subunit B of Bacillus cereus (strain G9842).